The primary structure comprises 185 residues: Small ribosomal subunit protein uS7 (185 aa).

Belongs to the universal ribosomal protein uS7 family. Part of the 30S ribosomal subunit.

Functionally, one of the primary rRNA binding proteins, it binds directly to 16S rRNA where it nucleates assembly of the head domain of the 30S subunit. Is located at the subunit interface close to the decoding center. This Methanosarcina barkeri (strain Fusaro / DSM 804) protein is Small ribosomal subunit protein uS7.